Reading from the N-terminus, the 455-residue chain is T-box protein VegT-A (455 aa).

3 disordered regions span residues 21–40 (SNCASDVKSSPDMDSVSSQD), 229–262 (REQERSHKRDDVLKILQQSPSKRQKRKKWEDSPE), and 295–346 (ANQG…EPSS). The segment at residues 57–230 (LWSQFHQEGT…HNPFAKGFRE (174 aa)) is a DNA-binding region (T-box). Positions 229 to 241 (REQERSHKRDDVL) are enriched in basic and acidic residues. The span at 308-324 (GANQEQQVPTSSSNFYN) shows a compositional bias: polar residues.

As to quaternary structure, forms a repression complex on the promoters of the nodal/nr1 and siamois genes with the maternal factors tcf7l1/tcf3 and pouf5.1/oct-25. Interacts (via C-terminus) with tcf7l1/tcf3 (via N-terminus). Also interacts with the other POU-domain transcription factors pou5f1.2/oct-91 and pou5f1.3/oct-60. In terms of tissue distribution, uniformly distributed in stage I oocytes but becomes localized to the vegetal hemisphere by stage II and remains so thereafter throughout oogenesis and the early embryonic cleavage stages. Zygotic expression parallels blastopore formation and shifts from dorsal expression in the marginal zone of late blastula and early gastrula stages to a ventral/lateral expression at the posterior end of later stage embryos. Expression is excluded from the notochord. In tailbud and tadpole stages, expressed exclusively in a subset of posterior Rohon-Beard neurons.

The protein resides in the nucleus. In terms of biological role, transcription factor required for both mesoderm and endoderm formation in the embryo; signaling determinants and concentration levels may determine which germ layer is formed. Acts together with beta-catenin to activate genes that are responsible for mesoderm induction including wnt-8, eomes t/bra, siamois, mix1 and sox17. Directly binds to promoter DNA. Patterns the mesoderm along the dorsoventral and posterior axis. Activates siamois gene transcription when alone or in combination with beta-catenin, but inhibits siamois transcription in combination with pou5f1.1/oct-25. This Xenopus laevis (African clawed frog) protein is T-box protein VegT-A (vegt-a).